A 92-amino-acid chain; its full sequence is Co-chaperonin GroES (92 aa).

It belongs to the GroES chaperonin family. In terms of assembly, heptamer of 7 subunits arranged in a ring. Interacts with the chaperonin GroEL.

It localises to the cytoplasm. Its function is as follows. Together with the chaperonin GroEL, plays an essential role in assisting protein folding. The GroEL-GroES system forms a nano-cage that allows encapsulation of the non-native substrate proteins and provides a physical environment optimized to promote and accelerate protein folding. GroES binds to the apical surface of the GroEL ring, thereby capping the opening of the GroEL channel. This is Co-chaperonin GroES from Thermotoga neapolitana.